Here is a 309-residue protein sequence, read N- to C-terminus: tRNA pseudouridine synthase B (309 aa).

Catalysis depends on D39, which acts as the Nucleophile.

This sequence belongs to the pseudouridine synthase TruB family. Type 1 subfamily.

The catalysed reaction is uridine(55) in tRNA = pseudouridine(55) in tRNA. Responsible for synthesis of pseudouridine from uracil-55 in the psi GC loop of transfer RNAs. The protein is tRNA pseudouridine synthase B of Bacillus subtilis (strain 168).